The primary structure comprises 215 residues: Protein-L-isoaspartate O-methyltransferase (215 aa).

The active site involves S62.

It belongs to the methyltransferase superfamily. L-isoaspartyl/D-aspartyl protein methyltransferase family.

Its subcellular location is the cytoplasm. The catalysed reaction is [protein]-L-isoaspartate + S-adenosyl-L-methionine = [protein]-L-isoaspartate alpha-methyl ester + S-adenosyl-L-homocysteine. In terms of biological role, catalyzes the methyl esterification of L-isoaspartyl residues in peptides and proteins that result from spontaneous decomposition of normal L-aspartyl and L-asparaginyl residues. It plays a role in the repair and/or degradation of damaged proteins. The polypeptide is Protein-L-isoaspartate O-methyltransferase (Rhodopseudomonas palustris (strain BisA53)).